The primary structure comprises 272 residues: uncharacterized protein (272 aa).

This is an uncharacterized protein from Archaeoglobus fulgidus (strain ATCC 49558 / DSM 4304 / JCM 9628 / NBRC 100126 / VC-16).